The sequence spans 80 residues: Putative membrane protein insertion efficiency factor (80 aa).

It belongs to the UPF0161 family.

Its subcellular location is the cell inner membrane. Functionally, could be involved in insertion of integral membrane proteins into the membrane. In Syntrophobacter fumaroxidans (strain DSM 10017 / MPOB), this protein is Putative membrane protein insertion efficiency factor.